The sequence spans 350 residues: GTPase Obg (350 aa).

Positions 1-159 (MKLVDEAEIL…RLLKLELRLL (159 aa)) constitute an Obg domain. Residues 127-146 (NMHFKSSVNRAPRQSTTGEE) are disordered. The segment covering 130–143 (FKSSVNRAPRQSTT) has biased composition (polar residues). The OBG-type G domain maps to 160-337 (ADVGLLGFPN…IMKDVMAFFD (178 aa)). GTP is bound by residues 166-173 (GFPNAGKS), 191-195 (FTTLY), 213-216 (DVPG), 287-290 (NKAD), and 318-320 (SAL). Ser173 and Thr193 together coordinate Mg(2+).

Belongs to the TRAFAC class OBG-HflX-like GTPase superfamily. OBG GTPase family. Monomer. Mg(2+) is required as a cofactor.

It is found in the cytoplasm. An essential GTPase which binds GTP, GDP and possibly (p)ppGpp with moderate affinity, with high nucleotide exchange rates and a fairly low GTP hydrolysis rate. Plays a role in control of the cell cycle, stress response, ribosome biogenesis and in those bacteria that undergo differentiation, in morphogenesis control. This chain is GTPase Obg, found in Xanthomonas oryzae pv. oryzae (strain MAFF 311018).